A 738-amino-acid polypeptide reads, in one-letter code: Ethylene receptor (738 aa).

A run of 3 helical transmembrane segments spans residues 22–42 (ISDF…VYFV), 53–73 (VLVQ…INLW), and 91–111 (VLTA…IPDL). The Cu cation site is built by cysteine 64 and histidine 68. The region spanning 157–305 (DRHTILKTTL…VVADQVAVAL (149 aa)) is the GAF domain. The region spanning 348–585 (VMNHEMRTPM…TAIFIVKLGI (238 aa)) is the Histidine kinase domain. Histidine 351 is subject to Phosphohistidine; by autocatalysis. A Response regulatory domain is found at 613–730 (KVLIMDDNGF…KMRSVLSELL (118 aa)). Aspartate 661 bears the 4-aspartylphosphate mark.

Belongs to the ethylene receptor family. Homodimer; disulfide-linked. It depends on Cu cation as a cofactor. In terms of processing, activation probably requires a transfer of a phosphate group between a His in the transmitter domain and an Asp of the receiver domain.

It localises to the endoplasmic reticulum membrane. It catalyses the reaction ATP + protein L-histidine = ADP + protein N-phospho-L-histidine.. Functionally, may act early in the ethylene signal transduction pathway, possibly as an ethylene receptor, or as a regulator of the pathway. The chain is Ethylene receptor (ETR1) from Nicotiana tabacum (Common tobacco).